Here is a 120-residue protein sequence, read N- to C-terminus: Flagellar transcriptional regulator FlhD (120 aa).

This sequence belongs to the FlhD family. As to quaternary structure, homodimer; disulfide-linked. Forms a heterohexamer composed of two FlhC and four FlhD subunits. Each FlhC binds a FlhD dimer, forming a heterotrimer, and a hexamer assembles by dimerization of two heterotrimers.

It is found in the cytoplasm. Functions in complex with FlhC as a master transcriptional regulator that regulates transcription of several flagellar and non-flagellar operons by binding to their promoter region. Activates expression of class 2 flagellar genes, including fliA, which is a flagellum-specific sigma factor that turns on the class 3 genes. Also regulates genes whose products function in a variety of physiological pathways. The chain is Flagellar transcriptional regulator FlhD from Erwinia tasmaniensis (strain DSM 17950 / CFBP 7177 / CIP 109463 / NCPPB 4357 / Et1/99).